We begin with the raw amino-acid sequence, 390 residues long: Succinyl-diaminopimelate desuccinylase (390 aa).

Histidine 74 is a Zn(2+) binding site. Aspartate 76 is an active-site residue. Aspartate 107 serves as a coordination point for Zn(2+). Residue glutamate 140 is the Proton acceptor of the active site. 3 residues coordinate Zn(2+): glutamate 141, glutamate 169, and histidine 363.

It belongs to the peptidase M20A family. DapE subfamily. As to quaternary structure, homodimer. The cofactor is Zn(2+). It depends on Co(2+) as a cofactor.

The enzyme catalyses N-succinyl-(2S,6S)-2,6-diaminopimelate + H2O = (2S,6S)-2,6-diaminopimelate + succinate. It functions in the pathway amino-acid biosynthesis; L-lysine biosynthesis via DAP pathway; LL-2,6-diaminopimelate from (S)-tetrahydrodipicolinate (succinylase route): step 3/3. Functionally, catalyzes the hydrolysis of N-succinyl-L,L-diaminopimelic acid (SDAP), forming succinate and LL-2,6-diaminopimelate (DAP), an intermediate involved in the bacterial biosynthesis of lysine and meso-diaminopimelic acid, an essential component of bacterial cell walls. The protein is Succinyl-diaminopimelate desuccinylase of Bartonella henselae (strain ATCC 49882 / DSM 28221 / CCUG 30454 / Houston 1) (Rochalimaea henselae).